A 356-amino-acid chain; its full sequence is UDP-N-acetylglucosamine--N-acetylmuramyl-(pentapeptide) pyrophosphoryl-undecaprenol N-acetylglucosamine transferase (356 aa).

UDP-N-acetyl-alpha-D-glucosamine is bound by residues S198 and Q289.

It belongs to the glycosyltransferase 28 family. MurG subfamily.

It localises to the cell membrane. It catalyses the reaction Mur2Ac(oyl-L-Ala-gamma-D-Glu-L-Lys-D-Ala-D-Ala)-di-trans,octa-cis-undecaprenyl diphosphate + UDP-N-acetyl-alpha-D-glucosamine = beta-D-GlcNAc-(1-&gt;4)-Mur2Ac(oyl-L-Ala-gamma-D-Glu-L-Lys-D-Ala-D-Ala)-di-trans,octa-cis-undecaprenyl diphosphate + UDP + H(+). It functions in the pathway cell wall biogenesis; peptidoglycan biosynthesis. In terms of biological role, cell wall formation. Catalyzes the transfer of a GlcNAc subunit on undecaprenyl-pyrophosphoryl-MurNAc-pentapeptide (lipid intermediate I) to form undecaprenyl-pyrophosphoryl-MurNAc-(pentapeptide)GlcNAc (lipid intermediate II). The polypeptide is UDP-N-acetylglucosamine--N-acetylmuramyl-(pentapeptide) pyrophosphoryl-undecaprenol N-acetylglucosamine transferase (Streptococcus thermophilus (strain CNRZ 1066)).